Consider the following 227-residue polypeptide: Ribosomal RNA large subunit methyltransferase E (227 aa).

Residues glycine 78, tryptophan 80, aspartate 103, aspartate 119, and aspartate 143 each contribute to the S-adenosyl-L-methionine site. The active-site Proton acceptor is lysine 183.

It belongs to the class I-like SAM-binding methyltransferase superfamily. RNA methyltransferase RlmE family.

It localises to the cytoplasm. It catalyses the reaction uridine(2552) in 23S rRNA + S-adenosyl-L-methionine = 2'-O-methyluridine(2552) in 23S rRNA + S-adenosyl-L-homocysteine + H(+). Functionally, specifically methylates the uridine in position 2552 of 23S rRNA at the 2'-O position of the ribose in the fully assembled 50S ribosomal subunit. In Rickettsia rickettsii (strain Iowa), this protein is Ribosomal RNA large subunit methyltransferase E.